Consider the following 430-residue polypeptide: Adenylosuccinate synthetase (430 aa).

GTP is bound by residues 13 to 19 (GDEGKGK) and 41 to 43 (GHT). The Proton acceptor role is filled by Asp-14. Residues Asp-14 and Gly-41 each contribute to the Mg(2+) site. IMP is bound by residues 14–17 (DEGK), 39–42 (NAGH), Thr-130, Arg-144, Gln-225, Thr-240, and Arg-304. His-42 functions as the Proton donor in the catalytic mechanism. 300–306 (ATTGRAR) contributes to the substrate binding site. GTP is bound by residues Arg-306, 332–334 (KLD), and 414–416 (STG).

Belongs to the adenylosuccinate synthetase family. In terms of assembly, homodimer. Mg(2+) is required as a cofactor.

It is found in the cytoplasm. The enzyme catalyses IMP + L-aspartate + GTP = N(6)-(1,2-dicarboxyethyl)-AMP + GDP + phosphate + 2 H(+). It functions in the pathway purine metabolism; AMP biosynthesis via de novo pathway; AMP from IMP: step 1/2. In terms of biological role, plays an important role in the de novo pathway of purine nucleotide biosynthesis. Catalyzes the first committed step in the biosynthesis of AMP from IMP. This chain is Adenylosuccinate synthetase, found in Pseudomonas syringae pv. syringae (strain B728a).